A 543-amino-acid chain; its full sequence is Heparanase (543 aa).

Residues Met-1 to Ala-35 form the signal peptide. Heparan sulfate group contacts are provided by residues Asp-62–Asn-64 and Thr-97. The propeptide at Ser-110 to Gln-157 is linker peptide. Cys-127 and Cys-179 are oxidised to a cystine. Lys-158–Asn-162 contacts heparan sulfate group. Residues Asn-162, Asn-178, Asn-200, and Asn-217 are each glycosylated (N-linked (GlcNAc...) asparagine). Glu-225 acts as the Proton donor in catalysis. Residue Asn-238 is glycosylated (N-linked (GlcNAc...) asparagine). Heparan sulfate group contacts are provided by residues Gln-270 to Lys-280, His-296, and Arg-303. The tract at residues Glu-288 to Lys-417 is required for heterodimerization with the heparanase 8 kDa subunit. Catalysis depends on Glu-343, which acts as the Nucleophile. Heparan sulfate group is bound by residues Tyr-348–Gly-350 and Gly-389–Tyr-391. Cys-437 and Cys-542 form a disulfide bridge. N-linked (GlcNAc...) asparagine glycosylation is present at Asn-459. Residues Phe-527–Ile-543 are required for transferring proheparanase to the Golgi apparatus, secretion and subsequent enzyme activity and for enhancement of PKB/AKT1 phosphorylation.

The protein belongs to the glycosyl hydrolase 79 family. As to quaternary structure, heterodimer; heterodimer formation between the 8 kDa and the 50 kDa subunits is required for enzyme activity. Interacts with TF; the interaction, inhibited by heparin, enhances the generation of activated factor X and activates coagulation. Interacts with HRG; the interaction is enhanced at acidic pH, partially inhibits binding of HPSE to cell surface receptors and modulates its enzymatic activity. Interacts with SDC1; the interaction enhances the shedding of SDC1. Interacts with HPSE2. Post-translationally, proteolytically processed. The cleavage of the 65 kDa form leads to the generation of a linker peptide, and 8 kDa and 50 kDa products. The active form, the 8/50 kDa heterodimer, is resistant to degradation. Complete removal of the linker peptide appears to be a prerequisite to the complete activation of the enzyme. In terms of processing, N-glycosylated. Glycosylation of the 50 kDa subunit appears to be essential for its solubility. In terms of tissue distribution, highly expressed in placenta and spleen and weakly expressed in lymph node, thymus, peripheral blood leukocytes, bone marrow, endothelial cells, fetal liver and tumor tissues. Also expressed in hair follicles, specifically in both Henle's and Huxley's layers of inner the root sheath (IRS) at anagen phase.

The protein localises to the lysosome membrane. The protein resides in the secreted. It is found in the nucleus. The catalysed reaction is endohydrolysis of (1-&gt;4)-beta-D-glycosidic bonds of heparan sulfate chains in heparan sulfate proteoglycan.. Its activity is regulated as follows. Inhibited by EDTA, laminarin sulfate and, to a lower extent, by heparin and sulfamin and activated by calcium and magnesium. In terms of biological role, endoglycosidase that cleaves heparan sulfate proteoglycans (HSPGs) into heparan sulfate side chains and core proteoglycans. Participates in extracellular matrix (ECM) degradation and remodeling. Selectively cleaves the linkage between a glucuronic acid unit and an N-sulfo glucosamine unit carrying either a 3-O-sulfo or a 6-O-sulfo group. Can also cleave the linkage between a glucuronic acid unit and an N-sulfo glucosamine unit carrying a 2-O-sulfo group, but not linkages between a glucuronic acid unit and a 2-O-sulfated iduronic acid moiety. It is essentially inactive at neutral pH but becomes active under acidic conditions such as during tumor invasion and in inflammatory processes. Facilitates cell migration associated with metastasis, wound healing and inflammation. Enhances shedding of syndecans, and increases endothelial invasion and angiogenesis in myelomas. Acts as a procoagulant by increasing the generation of activation factor X in the presence of tissue factor and activation factor VII. Increases cell adhesion to the extracellular matrix (ECM), independent of its enzymatic activity. Induces AKT1/PKB phosphorylation via lipid rafts increasing cell mobility and invasion. Heparin increases this AKT1/PKB activation. Regulates osteogenesis. Enhances angiogenesis through up-regulation of SRC-mediated activation of VEGF. Implicated in hair follicle inner root sheath differentiation and hair homeostasis. The sequence is that of Heparanase (HPSE) from Homo sapiens (Human).